The chain runs to 652 residues: DNA mismatch repair protein MutL (652 aa).

The protein belongs to the DNA mismatch repair MutL/HexB family.

Its function is as follows. This protein is involved in the repair of mismatches in DNA. It is required for dam-dependent methyl-directed DNA mismatch repair. May act as a 'molecular matchmaker', a protein that promotes the formation of a stable complex between two or more DNA-binding proteins in an ATP-dependent manner without itself being part of a final effector complex. The protein is DNA mismatch repair protein MutL of Aliivibrio salmonicida (strain LFI1238) (Vibrio salmonicida (strain LFI1238)).